A 418-amino-acid polypeptide reads, in one-letter code: Actin-related protein 3 (418 aa).

Position 2 is an N-acetylalanine (alanine 2).

Belongs to the actin family. ARP3 subfamily. As to quaternary structure, component of the Arp2/3 complex composed of ACTR2/ARP2, ACTR3/ARP3, ARPC1B/p41-ARC, ARPC2/p34-ARC, ARPC3/p21-ARC, ARPC4/p20-ARC and ARPC5/p16-ARC. In terms of tissue distribution, detected in fibroblasts.

The protein localises to the cytoplasm. It localises to the cytoskeleton. Its subcellular location is the cell projection. It is found in the nucleus. In terms of biological role, ATP-binding component of the Arp2/3 complex, a multiprotein complex that mediates actin polymerization upon stimulation by nucleation-promoting factor (NPF). The Arp2/3 complex mediates the formation of branched actin networks in the cytoplasm, providing the force for cell motility. Seems to contact the pointed end of the daughter actin filament. In addition to its role in the cytoplasmic cytoskeleton, the Arp2/3 complex also promotes actin polymerization in the nucleus, thereby regulating gene transcription and repair of damaged DNA. The Arp2/3 complex promotes homologous recombination (HR) repair in response to DNA damage by promoting nuclear actin polymerization, leading to drive motility of double-strand breaks (DSBs). The protein is Actin-related protein 3 (ACTR3) of Gallus gallus (Chicken).